Consider the following 217-residue polypeptide: Ribonuclease HII 2 (217 aa).

Positions 28–217 constitute an RNase H type-2 domain; it reads GLLAGVDEAG…VREVLLERRP (190 aa). A divalent metal cation is bound by residues aspartate 34, glutamate 35, and aspartate 126.

Belongs to the RNase HII family. It depends on Mn(2+) as a cofactor. Mg(2+) is required as a cofactor.

The protein resides in the cytoplasm. It carries out the reaction Endonucleolytic cleavage to 5'-phosphomonoester.. Functionally, endonuclease that specifically degrades the RNA of RNA-DNA hybrids. This chain is Ribonuclease HII 2, found in Methylibium petroleiphilum (strain ATCC BAA-1232 / LMG 22953 / PM1).